Reading from the N-terminus, the 571-residue chain is Cytosolic Fe-S cluster assembly factor NAR1 (571 aa).

Residues Cys-20, Cys-62, Cys-65, Cys-68, Cys-204, and Cys-259 each coordinate [4Fe-4S] cluster. A disordered region spans residues 415–437 (AKPSRMPGGKPIGSARRPNGKAS). 2 residues coordinate [4Fe-4S] cluster: Cys-449 and Cys-453.

Belongs to the NARF family.

Functionally, component of the cytosolic Fe/S protein assembly machinery. Required for maturation of extramitochondrial Fe/S proteins. May play a role in the transfer of pre-assembled Fe/S clusters to target apoproteins. This is Cytosolic Fe-S cluster assembly factor NAR1 (NAR1) from Sclerotinia sclerotiorum (strain ATCC 18683 / 1980 / Ss-1) (White mold).